The chain runs to 227 residues: UPF0173 metal-dependent hydrolase BPUM_2573 (227 aa).

It belongs to the UPF0173 family.

The protein is UPF0173 metal-dependent hydrolase BPUM_2573 of Bacillus pumilus (strain SAFR-032).